A 226-amino-acid chain; its full sequence is EEF1A lysine methyltransferase 3 (226 aa).

S-adenosyl-L-methionine contacts are provided by residues W57, 83–85 (GAG), D104, W133, and A150.

Belongs to the methyltransferase superfamily. METTL21 family. Interacts with members of the heat shock protein 70 and 90 families and of the TCP-1 chaperonin family, as well as with HSPD1, STIP1 and tubulin; at least some of these proteins may be methylation substrates.

It is found in the cytoplasm. It localises to the cytoskeleton. Its subcellular location is the microtubule organizing center. The protein localises to the centrosome. The catalysed reaction is L-lysyl-[protein] + 3 S-adenosyl-L-methionine = N(6),N(6),N(6)-trimethyl-L-lysyl-[protein] + 3 S-adenosyl-L-homocysteine + 3 H(+). It carries out the reaction L-lysyl-[protein] + S-adenosyl-L-methionine = N(6)-methyl-L-lysyl-[protein] + S-adenosyl-L-homocysteine + H(+). The enzyme catalyses N(6)-methyl-L-lysyl-[protein] + S-adenosyl-L-methionine = N(6),N(6)-dimethyl-L-lysyl-[protein] + S-adenosyl-L-homocysteine + H(+). It catalyses the reaction N(6),N(6)-dimethyl-L-lysyl-[protein] + S-adenosyl-L-methionine = N(6),N(6),N(6)-trimethyl-L-lysyl-[protein] + S-adenosyl-L-homocysteine + H(+). Its function is as follows. Protein-lysine methyltransferase that selectively mono-, di- and trimethylates 'Lys-165' of the translation elongation factors EEF1A1 and EEF1A2 in an aminoacyl-tRNA and GTP-dependent manner. EEF1A1 methylation by EEF1AKMT3 is dynamic as well as inducible by stress conditions, such as ER-stress, and plays a regulatory role on mRNA translation. This Homo sapiens (Human) protein is EEF1A lysine methyltransferase 3.